The sequence spans 341 residues: Methionine import ATP-binding protein MetN 2 (341 aa).

One can recognise an ABC transporter domain in the interval 2–241 (IELKEVVKEY…PQHTVTKRFV (240 aa)). 38–45 (GFSGAGKS) lines the ATP pocket.

The protein belongs to the ABC transporter superfamily. Methionine importer (TC 3.A.1.24) family. In terms of assembly, the complex is composed of two ATP-binding proteins (MetN), two transmembrane proteins (MetI) and a solute-binding protein (MetQ).

The protein localises to the cell membrane. It catalyses the reaction L-methionine(out) + ATP + H2O = L-methionine(in) + ADP + phosphate + H(+). The enzyme catalyses D-methionine(out) + ATP + H2O = D-methionine(in) + ADP + phosphate + H(+). Functionally, part of the ABC transporter complex MetNIQ involved in methionine import. Responsible for energy coupling to the transport system. This chain is Methionine import ATP-binding protein MetN 2, found in Staphylococcus aureus (strain USA300).